Here is a 471-residue protein sequence, read N- to C-terminus: V-type ATP synthase beta chain (471 aa).

It belongs to the ATPase alpha/beta chains family.

Produces ATP from ADP in the presence of a proton gradient across the membrane. The V-type beta chain is a regulatory subunit. The protein is V-type ATP synthase beta chain of Streptococcus pyogenes serotype M18 (strain MGAS8232).